Consider the following 319-residue polypeptide: Glutathione synthetase (319 aa).

The ATP-grasp domain occupies Glu125–Glu311. Residue Phe151 to Gly208 coordinates ATP. Mg(2+)-binding residues include Glu282 and Asn284.

The protein belongs to the prokaryotic GSH synthase family. The cofactor is Mg(2+). It depends on Mn(2+) as a cofactor.

The catalysed reaction is gamma-L-glutamyl-L-cysteine + glycine + ATP = glutathione + ADP + phosphate + H(+). It functions in the pathway sulfur metabolism; glutathione biosynthesis; glutathione from L-cysteine and L-glutamate: step 2/2. The polypeptide is Glutathione synthetase (Pseudomonas syringae pv. tomato (strain ATCC BAA-871 / DC3000)).